The following is a 288-amino-acid chain: Intermediate transcription factor 3 small subunit (288 aa).

It belongs to the orthopoxvirus OPG134 family. As to quaternary structure, heterodimer of a 45 kDa (A23R) and a 32 kDa (A8R) subunit to form the virus intermediate transcription factor (VITF)-3.

Acts with RNA polymerase to initiate transcription from intermediate gene promoters. This chain is Intermediate transcription factor 3 small subunit (OPG134), found in Homo sapiens (Human).